The following is a 91-amino-acid chain: DNA-directed RNA polymerase subunit Rpo11 (91 aa).

Belongs to the archaeal Rpo11/eukaryotic RPB11/RPC19 RNA polymerase subunit family. Part of the RNA polymerase complex.

It localises to the cytoplasm. It carries out the reaction RNA(n) + a ribonucleoside 5'-triphosphate = RNA(n+1) + diphosphate. DNA-dependent RNA polymerase (RNAP) catalyzes the transcription of DNA into RNA using the four ribonucleoside triphosphates as substrates. This Methanothrix thermoacetophila (strain DSM 6194 / JCM 14653 / NBRC 101360 / PT) (Methanosaeta thermophila) protein is DNA-directed RNA polymerase subunit Rpo11.